The sequence spans 161 residues: MPSFDIVSKVDMQEIDNAVNQALKEILQRYDFKGTHNEIKLENEAIVLLGADDYKLDAVIDVLKGKLAKRNVSPKCLDFGKKEPASGTAVRQRVAIVQGISKEKGKEICKLIKNSKLKVQAQIMDDQVRVSGKKIDDLQSVIQLLKGQDVGIELQFINMRS.

Belongs to the YajQ family.

Functionally, nucleotide-binding protein. The chain is Nucleotide-binding protein Pcar_0033 from Syntrophotalea carbinolica (strain DSM 2380 / NBRC 103641 / GraBd1) (Pelobacter carbinolicus).